A 499-amino-acid polypeptide reads, in one-letter code: Glycerol kinase (499 aa).

Residue Thr13 coordinates ADP. The ATP site is built by Thr13, Thr14, and Ser15. Residue Thr13 participates in sn-glycerol 3-phosphate binding. ADP is bound at residue Arg17. Sn-glycerol 3-phosphate-binding residues include Arg83, Glu84, Tyr135, and Asp245. Glycerol-binding residues include Arg83, Glu84, Tyr135, Asp245, and Gln246. Residues Thr267 and Gly310 each contribute to the ADP site. Residues Thr267, Gly310, Gln314, and Gly411 each coordinate ATP. ADP-binding residues include Gly411 and Asn415.

This sequence belongs to the FGGY kinase family.

It catalyses the reaction glycerol + ATP = sn-glycerol 3-phosphate + ADP + H(+). The protein operates within polyol metabolism; glycerol degradation via glycerol kinase pathway; sn-glycerol 3-phosphate from glycerol: step 1/1. Inhibited by fructose 1,6-bisphosphate (FBP). In terms of biological role, key enzyme in the regulation of glycerol uptake and metabolism. Catalyzes the phosphorylation of glycerol to yield sn-glycerol 3-phosphate. This Stenotrophomonas maltophilia (strain R551-3) protein is Glycerol kinase.